Reading from the N-terminus, the 276-residue chain is Large ribosomal subunit protein uL2 (276 aa).

Disordered regions lie at residues M1–K61 and A224–N276. Over residues G15–K31 the composition is skewed to basic and acidic residues.

This sequence belongs to the universal ribosomal protein uL2 family. Part of the 50S ribosomal subunit. Forms a bridge to the 30S subunit in the 70S ribosome.

In terms of biological role, one of the primary rRNA binding proteins. Required for association of the 30S and 50S subunits to form the 70S ribosome, for tRNA binding and peptide bond formation. It has been suggested to have peptidyltransferase activity; this is somewhat controversial. Makes several contacts with the 16S rRNA in the 70S ribosome. In Treponema denticola (strain ATCC 35405 / DSM 14222 / CIP 103919 / JCM 8153 / KCTC 15104), this protein is Large ribosomal subunit protein uL2.